Here is a 216-residue protein sequence, read N- to C-terminus: DNA-directed RNA polymerase subunit alpha (216 aa).

Belongs to the RNA polymerase alpha chain family. As to quaternary structure, in plastids the minimal PEP RNA polymerase catalytic core is composed of four subunits: alpha, beta, beta', and beta''. When a (nuclear-encoded) sigma factor is associated with the core the holoenzyme is formed, which can initiate transcription.

Its subcellular location is the plastid. The protein resides in the chloroplast. It carries out the reaction RNA(n) + a ribonucleoside 5'-triphosphate = RNA(n+1) + diphosphate. In terms of biological role, DNA-dependent RNA polymerase catalyzes the transcription of DNA into RNA using the four ribonucleoside triphosphates as substrates. The sequence is that of DNA-directed RNA polymerase subunit alpha (rpoA) from Euglena granulata.